Reading from the N-terminus, the 289-residue chain is Protease HtpX (289 aa).

2 helical membrane-spanning segments follow: residues 7-27 (LFLL…NIIF) and 38-58 (GGIL…SLFM). His144 is a binding site for Zn(2+). The active site involves Glu145. Residue His148 coordinates Zn(2+). Transmembrane regions (helical) follow at residues 155–175 (VTMT…SRII) and 194–214 (LVFW…ATMI). Glu223 contributes to the Zn(2+) binding site.

It belongs to the peptidase M48B family. Requires Zn(2+) as cofactor.

The protein localises to the cell inner membrane. In Actinobacillus pleuropneumoniae serotype 5b (strain L20), this protein is Protease HtpX.